We begin with the raw amino-acid sequence, 1394 residues long: DNA-directed RNA polymerase subunit beta' (1394 aa).

Cys71, Cys73, Cys86, and Cys89 together coordinate Zn(2+). Mg(2+) is bound by residues Asp462, Asp464, and Asp466. Cys811, Cys885, Cys892, and Cys895 together coordinate Zn(2+).

This sequence belongs to the RNA polymerase beta' chain family. The RNAP catalytic core consists of 2 alpha, 1 beta, 1 beta' and 1 omega subunit. When a sigma factor is associated with the core the holoenzyme is formed, which can initiate transcription. The cofactor is Mg(2+). It depends on Zn(2+) as a cofactor.

The enzyme catalyses RNA(n) + a ribonucleoside 5'-triphosphate = RNA(n+1) + diphosphate. Functionally, DNA-dependent RNA polymerase catalyzes the transcription of DNA into RNA using the four ribonucleoside triphosphates as substrates. This Xanthobacter autotrophicus (strain ATCC BAA-1158 / Py2) protein is DNA-directed RNA polymerase subunit beta'.